The primary structure comprises 128 residues: Large ribosomal subunit protein bL17 (128 aa).

It belongs to the bacterial ribosomal protein bL17 family. As to quaternary structure, part of the 50S ribosomal subunit. Contacts protein L32.

This is Large ribosomal subunit protein bL17 from Ehrlichia ruminantium (strain Gardel).